The primary structure comprises 1366 residues: DNA-directed RNA polymerase subunit beta'' (1366 aa).

Residues Cys220, Cys291, Cys298, and Cys301 each coordinate Zn(2+).

The protein belongs to the RNA polymerase beta' chain family. RpoC2 subfamily. In terms of assembly, in plastids the minimal PEP RNA polymerase catalytic core is composed of four subunits: alpha, beta, beta', and beta''. When a (nuclear-encoded) sigma factor is associated with the core the holoenzyme is formed, which can initiate transcription. The cofactor is Zn(2+).

It localises to the plastid. The protein localises to the chloroplast. The enzyme catalyses RNA(n) + a ribonucleoside 5'-triphosphate = RNA(n+1) + diphosphate. Functionally, DNA-dependent RNA polymerase catalyzes the transcription of DNA into RNA using the four ribonucleoside triphosphates as substrates. The sequence is that of DNA-directed RNA polymerase subunit beta'' from Phaseolus vulgaris (Kidney bean).